A 442-amino-acid chain; its full sequence is UDP-N-acetylglucosamine--peptide N-acetylglucosaminyltransferase stabilizing protein GtfB (442 aa).

The protein belongs to the GtfB family. As to quaternary structure, interacts with glycosyltransferase GtfA (Gtf1). Interacts with glycosyltransferase GtfA; probably forms a heterotetramer with 2 subunits each of GtfA and GtfB. Part of the accessory SecA2/SecY2 protein translocation apparatus.

Its subcellular location is the cell membrane. The protein operates within protein modification; protein glycosylation. Functionally, required for the polymorphic O-glycosylation of the serine-rich repeat protein Srr2. A stabilizing protein that is part of the accessory SecA2/SecY2 system specifically required to export serine-rich repeat proteins, probably Srr2 in this organism. The GtfA-GtfB (Gtf1-Gtf2 in this bacteria) complex adds GlcNAc from UDP-GlcNAc to Srr2 substrate, attaching the first sugar residue. Stabilizes the glycosylation activity of GtfA in vivo. Upon expression in a gtfB deletion mutant of S.parasanguis, GtfB confers incorrect glycosylation and partial complementation of a biofilm formation defect, while GtfA/GtfB restores correct expression of serine-rich repeat protein Fap1 and completely restores a biofilm formation defect in a S.parasanguis double gtfA-gtfB deletion. The sequence is that of UDP-N-acetylglucosamine--peptide N-acetylglucosaminyltransferase stabilizing protein GtfB from Streptococcus agalactiae.